The chain runs to 133 residues: Protein archease (133 aa).

Residues Asp11, Asp132, and Leu133 each coordinate Ca(2+).

This sequence belongs to the archease family.

Its function is as follows. Activates the tRNA-splicing ligase complex by facilitating the enzymatic turnover of catalytic subunit RtcB. Acts by promoting the guanylylation of RtcB, a key intermediate step in tRNA ligation. Can also alter the NTP specificity of RtcB such that ATP, dGTP or ITP is used efficiently. This is Protein archease from Thermoplasma volcanium (strain ATCC 51530 / DSM 4299 / JCM 9571 / NBRC 15438 / GSS1).